The primary structure comprises 269 residues: MPRSFLVKKHFNASKKPNYSELDTHTVIISPYLYESYPIPVIPKPEILTSGAYSPITVWTSSAAPLHSPLPSGLSPLTGYSSSLGRVSPPPSSDTSSKDHSGSESPISDEEERLQPKLSDPHAIEAEKFQCNLCNKTYSTFSGLAKHKQLHCDAQSRKSFSCKYCDKEYVSLGALKMHIRTHTLPCVCKICGKAFSRPWLLQGHIRTHTGEKPFSCPHCNRAFADRSNLRAHLQTHSDVKKYQCKNCSKTFSRMSLLHKHEESGCCVAH.

The interval 1–20 is SNAG domain; sequence MPRSFLVKKHFNASKKPNYS. The disordered stretch occupies residues 81–117; the sequence is SSSLGRVSPPPSSDTSSKDHSGSESPISDEEERLQPK. 4 consecutive C2H2-type zinc fingers follow at residues 129–151, 160–182, 186–208, and 214–236; these read FQCNLCNKTYSTFSGLAKHKQLH, FSCKYCDKEYVSLGALKMHIRTH, CVCKICGKAFSRPWLLQGHIRTH, and FSCPHCNRAFADRSNLRAHLQTH. The segment at 242–265 adopts a C2H2-type 5; atypical zinc-finger fold; it reads YQCKNCSKTFSRMSLLHKHEESGC.

The protein belongs to the snail C2H2-type zinc-finger protein family. Interacts (via SNAG domain) with LIMD1 (via LIM domains), WTIP (via LIM domains) and AJUBA (via LIM domains). Interacts (via zinc fingers) with KPNA2, KPNB1, and TNPO1. May interact (via zinc fingers) with IPO7. Phosphorylated by GSK3B. Once phosphorylated, it becomes a target for ubiquitination. Post-translationally, ubiquitinated by the SCF(FBXO11) complex; ubiquitination requires previous GSK3B-mediated SNAI2 phosphorylation.

Its subcellular location is the nucleus. It localises to the cytoplasm. Functionally, transcriptional repressor that modulates both activator-dependent and basal transcription. Involved in the generation and migration of neural crest cells. Plays a role in mediating RAF1-induced transcriptional repression of the TJ protein, occludin (OCLN) and subsequent oncogenic transformation of epithelial cells. Represses BRCA2 expression by binding to its E2-box-containing silencer and recruiting CTBP1 and HDAC1 in breast cells. In epidermal keratinocytes, binds to the E-box in ITGA3 promoter and represses its transcription. Involved in the regulation of ITGB1 and ITGB4 expression and cell adhesion and proliferation in epidermal keratinocytes. Binds to E-box2 domain of BSG and activates its expression during TGFB1-induced epithelial-mesenchymal transition (EMT) in hepatocytes. Represses E-Cadherin/CDH1 transcription via E-box elements. Involved in osteoblast maturation. Binds to RUNX2 and SOC9 promoters and may act as a positive and negative transcription regulator, respectively, in osteoblasts. Binds to CXCL12 promoter via E-box regions in mesenchymal stem cells and osteoblasts. Plays an essential role in TWIST1-induced EMT and its ability to promote invasion and metastasis. This is Zinc finger protein SNAI2 (Snai2) from Mus musculus (Mouse).